A 223-amino-acid chain; its full sequence is DNA mismatch repair protein MutH (223 aa).

It belongs to the MutH family.

The protein localises to the cytoplasm. In terms of biological role, sequence-specific endonuclease that cleaves unmethylated GATC sequences. It is involved in DNA mismatch repair. In Haemophilus influenzae (strain 86-028NP), this protein is DNA mismatch repair protein MutH.